Consider the following 353-residue polypeptide: O-antigen chain mannosyltransferase RfbU (353 aa).

This sequence belongs to the glycosyltransferase group 1 family. Glycosyltransferase 4 subfamily.

The enzyme catalyses alpha-L-rhamnosyl-(1-&gt;3)-alpha-D-galactosyl-1-diphospho-di-trans,octa-cis-undecaprenol + GDP-alpha-D-mannose = alpha-D-Man-(1-&gt;4)-alpha-L-Rha-(1-&gt;3)-alpha-D-Gal-di-trans,octa-cis-undecaprenyl diphosphate + GDP + H(+). The protein operates within bacterial outer membrane biogenesis; LPS O-antigen biosynthesis. Mannosyltransferase involved in the biosynthesis of the repeat unit of the lipopolysaccharide (LPS) O-antigen region. Catalyzes the addition of a mannose to the rhamnosyl-galactosyl-undecaprenyl diphosphate intermediate. This chain is O-antigen chain mannosyltransferase RfbU, found in Salmonella typhimurium (strain LT2 / SGSC1412 / ATCC 700720).